A 176-amino-acid polypeptide reads, in one-letter code: Translation initiation factor IF-3 (176 aa).

The protein belongs to the IF-3 family. In terms of assembly, monomer.

It is found in the cytoplasm. Its function is as follows. IF-3 binds to the 30S ribosomal subunit and shifts the equilibrium between 70S ribosomes and their 50S and 30S subunits in favor of the free subunits, thus enhancing the availability of 30S subunits on which protein synthesis initiation begins. This Microcystis aeruginosa (strain NIES-843 / IAM M-2473) protein is Translation initiation factor IF-3.